We begin with the raw amino-acid sequence, 302 residues long: Sulfate adenylyltransferase subunit 2 (302 aa).

A disordered region spans residues 280 to 302 (RQGRAIDHDQSGSMELKKRQGYF).

This sequence belongs to the PAPS reductase family. CysD subfamily. As to quaternary structure, heterodimer composed of CysD, the smaller subunit, and CysN.

The catalysed reaction is sulfate + ATP + H(+) = adenosine 5'-phosphosulfate + diphosphate. It functions in the pathway sulfur metabolism; hydrogen sulfide biosynthesis; sulfite from sulfate: step 1/3. With CysN forms the ATP sulfurylase (ATPS) that catalyzes the adenylation of sulfate producing adenosine 5'-phosphosulfate (APS) and diphosphate, the first enzymatic step in sulfur assimilation pathway. APS synthesis involves the formation of a high-energy phosphoric-sulfuric acid anhydride bond driven by GTP hydrolysis by CysN coupled to ATP hydrolysis by CysD. The polypeptide is Sulfate adenylyltransferase subunit 2 (Vibrio cholerae serotype O1 (strain ATCC 39315 / El Tor Inaba N16961)).